The sequence spans 23 residues: Large ribosomal subunit protein uL10 (23 aa).

Belongs to the universal ribosomal protein uL10 family. As to quaternary structure, part of the ribosomal stalk of the 50S ribosomal subunit. The N-terminus interacts with L11 and the large rRNA to form the base of the stalk. The C-terminus forms an elongated spine to which L12 dimers bind in a sequential fashion forming a multimeric L10(L12)X complex.

In terms of biological role, forms part of the ribosomal stalk, playing a central role in the interaction of the ribosome with GTP-bound translation factors. The sequence is that of Large ribosomal subunit protein uL10 (rplJ) from Klebsiella pneumoniae.